The sequence spans 66 residues: DNA gyrase inhibitor YacG (66 aa).

Zn(2+) contacts are provided by Cys9, Cys12, Cys28, and Cys32. Residues 45 to 66 (HKIAGSEGSEDELYSGDLEPRH) form a disordered region.

This sequence belongs to the DNA gyrase inhibitor YacG family. As to quaternary structure, interacts with GyrB. Requires Zn(2+) as cofactor.

Functionally, inhibits all the catalytic activities of DNA gyrase by preventing its interaction with DNA. Acts by binding directly to the C-terminal domain of GyrB, which probably disrupts DNA binding by the gyrase. The protein is DNA gyrase inhibitor YacG of Pseudomonas putida (strain ATCC 700007 / DSM 6899 / JCM 31910 / BCRC 17059 / LMG 24140 / F1).